A 775-amino-acid chain; its full sequence is Phenylalanine--tRNA ligase beta subunit (775 aa).

One can recognise a tRNA-binding domain in the interval 39–147 (GIDLDGVVFG…EDFKPGTDAN (109 aa)). One can recognise a B5 domain in the interval 394–470 (YKPKKVFLPQ…RVKGYEHYTS (77 aa)). Aspartate 448, aspartate 454, glutamate 457, and glutamate 458 together coordinate Mg(2+). Residues 681 to 774 (AKFPPVVRDI…LKEKYGVELR (94 aa)) enclose the FDX-ACB domain.

It belongs to the phenylalanyl-tRNA synthetase beta subunit family. Type 1 subfamily. As to quaternary structure, tetramer of two alpha and two beta subunits. It depends on Mg(2+) as a cofactor.

The protein localises to the cytoplasm. The enzyme catalyses tRNA(Phe) + L-phenylalanine + ATP = L-phenylalanyl-tRNA(Phe) + AMP + diphosphate + H(+). The sequence is that of Phenylalanine--tRNA ligase beta subunit (pheT) from Aquifex aeolicus (strain VF5).